The chain runs to 553 residues: Putative transport protein YidE (553 aa).

The next 5 helical transmembrane spans lie at 4-24 (IALT…IGNV), 28-48 (GIGL…HFVS), 65-85 (FGLI…FFAS), 95-115 (LFAV…HKLF), and 158-178 (MSYA…MWML). RCK C-terminal domains lie at 191–276 (QQHE…VIGQ) and 279–361 (DTSL…VLGN). Helical transmembrane passes span 371–391 (MLPV…PVFV), 393–413 (GFPA…ALIL), 439–459 (IVLF…NTLV), 464–484 (LSWI…VGIL), 493–513 (YLTM…LAFA), and 533–553 (LVMF…WSIG).

The protein belongs to the AAE transporter (TC 2.A.81) family. YidE subfamily.

It localises to the cell membrane. This is Putative transport protein YidE from Escherichia coli (strain ATCC 8739 / DSM 1576 / NBRC 3972 / NCIMB 8545 / WDCM 00012 / Crooks).